An 844-amino-acid polypeptide reads, in one-letter code: Rho guanine nucleotide exchange factor 33 (844 aa).

Basic and acidic residues-rich tracts occupy residues 1-13 (MEKT…ENEH) and 101-113 (QQKI…EKRR). Disordered stretches follow at residues 1-20 (MEKT…NNPS), 101-142 (QQKI…GSPF), and 169-189 (AQES…MGPG). Residues 54–129 (LEEKVKSCRC…AKKTQKEEHS (76 aa)) adopt a coiled-coil conformation. Residues 130–142 (SQAGPAQAQGSPF) show a composition bias toward polar residues. The DH domain maps to 265 to 440 (KRQTVALELL…RVFISHYTLL (176 aa)). Disordered regions lie at residues 498 to 541 (LQPY…DWEL), 668 to 687 (RPEH…AGSS), and 702 to 745 (AKPL…RAAQ). Arg-757 carries the post-translational modification Omega-N-methylarginine. Basic and acidic residues predominate over residues 787 to 800 (DTTRFCPKEERESE). Residues 787-844 (DTTRFCPKEERESEQTSFSDQNPRQDQKGGFRSSFRKLFKKKNGNATGEDFCGPWGWW) form a disordered region. Positions 820 to 829 (SFRKLFKKKN) are enriched in basic residues.

In terms of biological role, may act as a guanine-nucleotide releasing factor. This is Rho guanine nucleotide exchange factor 33 (ARHGEF33) from Homo sapiens (Human).